Consider the following 1004-residue polypeptide: Receptor-type tyrosine-protein phosphatase N2 (1004 aa).

Positions 1–27 (MGLPLPLLLLLLLPPPLPRALPAPASA) are cleaved as a signal peptide. The tract at residues 1 to 409 (MGLPLPLLLL…PEAPLLEKSS (409 aa)) is involved in localization to secretory granules; interaction with CPE. Residues 28–603 (RGRQLPGRLG…HPEEQEDSTK (576 aa)) are Extracellular-facing. R259 bears the Omega-N-methylarginine mark. Disordered stretches follow at residues 274-294 (APALSQRWPLPPGDSKDSLSM), 333-360 (QSDPVEGSQESHGRGAEGQLREQADAPE), and 393-459 (DHGS…WRLE). S340 carries the post-translational modification Phosphoserine. 2 stretches are compositionally biased toward basic and acidic residues: residues 341–356 (QESHGRGAEGQLREQA) and 407–418 (KSSRAEMKKSEQ). A compositionally biased stretch (acidic residues) spans 419 to 430 (PEEVLSSEEETA). Residues S424 and S425 each carry the phosphoserine modification. A compositionally biased stretch (basic and acidic residues) spans 431-450 (GVEHVKSRTYSKDLLERKPN). N553 carries N-linked (GlcNAc...) asparagine glycosylation. Residues 604 to 624 (FIVLTFLSIACILAVLLASSL) traverse the membrane as a helical segment. The Cytoplasmic segment spans residues 625–1004 (AYCLRHNSHY…VNAILKALPQ (380 aa)). Residues 655–664 (YQELCRQRMA) carry the Tyrosine-based internalization motif motif. The interval 665-710 (VRPQDHSEGPHTSRINSVSSQLSDGPMPSPSARSSTSSWSEEPAQS) is disordered. Over residues 677-687 (SRINSVSSQLS) the composition is skewed to polar residues. S681 is subject to Phosphoserine; by PKA. S687 bears the Phosphoserine mark. Residues 694 to 710 (PSARSSTSSWSEEPAQS) show a composition bias toward low complexity. T700 carries the post-translational modification Phosphothreonine; by PKA. Residues 734–994 (LEKEWEALCA…EFALTAVAEE (261 aa)) form the Tyrosine-protein phosphatase domain. Substrate is bound by residues D902 and 934-940 (CSDGAGR). The active-site Phosphocysteine intermediate is the C934. The residue at position 959 (K959) is an N6-acetyllysine. Q979 contributes to the substrate binding site. Positions 993 to 999 (EEVNAIL) match the Leucine-based sorting signal motif.

Belongs to the protein-tyrosine phosphatase family. Receptor class 8 subfamily. In terms of assembly, self-associates. Interacts (via cytoplasmic domain) with PTPRN (via cytoplasmic domain). Interacts (precursor form) with CPE. Interacts with HAP1. Interacts with AP2A1 or AP2A2 and AP1G1; indicative for an association with adaptor protein complex 2 (AP-2) and adaptor protein complex 1 (AP-1). Interacts with AP2M1; indicative for an association with adaptor protein complex 2 (AP-2). Interacts with MYO5A. Post-translationally, subject to proteolytic cleavage at multiple sites.

The protein resides in the cytoplasmic vesicle. It is found in the secretory vesicle membrane. The protein localises to the secretory vesicle. Its subcellular location is the synaptic vesicle membrane. The enzyme catalyses O-phospho-L-tyrosyl-[protein] + H2O = L-tyrosyl-[protein] + phosphate. Plays a role in vesicle-mediated secretory processes. Required for normal accumulation of secretory vesicles in hippocampus, pituitary and pancreatic islets. Required for the accumulation of normal levels of insulin-containing vesicles and preventing their degradation. Plays a role in insulin secretion in response to glucose stimuli. Required for normal accumulation of the neurotransmitters norepinephrine, dopamine and serotonin in the brain. In females, but not in males, required for normal accumulation and secretion of pituitary hormones, such as luteinizing hormone (LH) and follicle-stimulating hormone (FSH). Required to maintain normal levels of renin expression and renin release. May regulate catalytic active protein-tyrosine phosphatases such as PTPRA through dimerization. Has phosphatidylinositol phosphatase activity; the PIPase activity is involved in its ability to regulate insulin secretion. Can dephosphorylate phosphatidylinositol 4,5-biphosphate, phosphatidylinositol 5-phosphate and phosphatidylinositol 3-phosphate. Regulates PI(4,5)P2 level in the plasma membrane and localization of cofilin at the plasma membrane and thus is indirectly involved in regulation of actin dynamics related to cell migration and metastasis; upon hydrolysis of PI(4,5)P2 cofilin is released from the plasma membrane and acts in the cytoplasm in severing F-actin filaments. This is Receptor-type tyrosine-protein phosphatase N2 (Ptprn2) from Rattus norvegicus (Rat).